A 334-amino-acid polypeptide reads, in one-letter code: Phosphate acyltransferase (334 aa).

The protein belongs to the PlsX family. As to quaternary structure, homodimer. Probably interacts with PlsY.

It localises to the cytoplasm. The enzyme catalyses a fatty acyl-[ACP] + phosphate = an acyl phosphate + holo-[ACP]. It participates in lipid metabolism; phospholipid metabolism. Catalyzes the reversible formation of acyl-phosphate (acyl-PO(4)) from acyl-[acyl-carrier-protein] (acyl-ACP). This enzyme utilizes acyl-ACP as fatty acyl donor, but not acyl-CoA. The chain is Phosphate acyltransferase from Streptococcus thermophilus (strain CNRZ 1066).